We begin with the raw amino-acid sequence, 265 residues long: 3-methyl-2-oxobutanoate hydroxymethyltransferase (265 aa).

Mg(2+)-binding residues include D44 and D83. 3-methyl-2-oxobutanoate is bound by residues 44–45, D83, and K113; that span reads DS. Mg(2+) is bound at residue E115. Catalysis depends on E183, which acts as the Proton acceptor.

It belongs to the PanB family. Homodecamer; pentamer of dimers. It depends on Mg(2+) as a cofactor.

The protein resides in the cytoplasm. It carries out the reaction 3-methyl-2-oxobutanoate + (6R)-5,10-methylene-5,6,7,8-tetrahydrofolate + H2O = 2-dehydropantoate + (6S)-5,6,7,8-tetrahydrofolate. Its pathway is cofactor biosynthesis; (R)-pantothenate biosynthesis; (R)-pantoate from 3-methyl-2-oxobutanoate: step 1/2. Its function is as follows. Catalyzes the reversible reaction in which hydroxymethyl group from 5,10-methylenetetrahydrofolate is transferred onto alpha-ketoisovalerate to form ketopantoate. The chain is 3-methyl-2-oxobutanoate hydroxymethyltransferase from Leptospira interrogans serogroup Icterohaemorrhagiae serovar copenhageni (strain Fiocruz L1-130).